Here is a 200-residue protein sequence, read N- to C-terminus: dTTP/UTP pyrophosphatase (200 aa).

Asp73 functions as the Proton acceptor in the catalytic mechanism.

The protein belongs to the Maf family. YhdE subfamily. The cofactor is a divalent metal cation.

Its subcellular location is the cytoplasm. The catalysed reaction is dTTP + H2O = dTMP + diphosphate + H(+). It catalyses the reaction UTP + H2O = UMP + diphosphate + H(+). Nucleoside triphosphate pyrophosphatase that hydrolyzes dTTP and UTP. May have a dual role in cell division arrest and in preventing the incorporation of modified nucleotides into cellular nucleic acids. The chain is dTTP/UTP pyrophosphatase from Chromohalobacter salexigens (strain ATCC BAA-138 / DSM 3043 / CIP 106854 / NCIMB 13768 / 1H11).